We begin with the raw amino-acid sequence, 976 residues long: 3-O-beta-L-arabinopyranosyl-alpha-L-arabinofuranosidase (976 aa).

The N-terminal stretch at 1–28 (MSHRNKALVAIVAGTALLISSGAAIGQA) is a signal peptide. The active-site Proton donor is the Glu190. Glu315 functions as the Nucleophile in the catalytic mechanism. One can recognise a CBM6 domain in the interval 519 to 654 (LLVEEVENTV…DNTLDKFLLY (136 aa)).

Belongs to the glycosyl hydrolase 39 family.

Its subcellular location is the secreted. The enzyme catalyses Hydrolysis of beta-L-Arap-(1-&gt;3)-L-Araf disaccharides from non-reducing terminals in branches of type II arabinogalactan attached to proteins.. Hydrolase involved in the degradation of the gum arabic arabinogalactan protein (AGP) and larch AGP. Catalyzes the release of 3-O-beta-L-arabinopyranosyl-L-arabinose (beta-L-Arap-(1-&gt;3)-L-Ara) from gum arabic AGP and larch AGP. Also cleaves a small amount of beta-L-Arap-(1-&gt;3)-L-Ara from sugar beet arabinan, but wheat AGP cannot be used as a substrate. Can also release 3-O-alpha-D-galactopyranosyl-L-arabinose (alpha-D-Galp-(1-&gt;3)-L-Ara) from gum arabic AGP, with low efficiency. The sequence is that of 3-O-beta-L-arabinopyranosyl-alpha-L-arabinofuranosidase from Bifidobacterium pseudocatenulatum.